The following is a 284-amino-acid chain: Nucleotide-binding protein TTE1834 (284 aa).

Position 8–15 (8–15 (GLSGAGKT)) interacts with ATP. 58–61 (DLRG) contacts GTP.

This sequence belongs to the RapZ-like family.

Its function is as follows. Displays ATPase and GTPase activities. This is Nucleotide-binding protein TTE1834 from Caldanaerobacter subterraneus subsp. tengcongensis (strain DSM 15242 / JCM 11007 / NBRC 100824 / MB4) (Thermoanaerobacter tengcongensis).